Here is a 320-residue protein sequence, read N- to C-terminus: 33 kDa chaperonin (320 aa).

Positions 1-17 (MTDASGSERLKRTKDIS) are enriched in basic and acidic residues. The tract at residues 1–27 (MTDASGSERLKRTKDISESTPPSSLPD) is disordered. Intrachain disulfides connect cysteine 262–cysteine 264 and cysteine 295–cysteine 298.

This sequence belongs to the HSP33 family. Post-translationally, under oxidizing conditions two disulfide bonds are formed involving the reactive cysteines. Under reducing conditions zinc is bound to the reactive cysteines and the protein is inactive.

It is found in the cytoplasm. Functionally, redox regulated molecular chaperone. Protects both thermally unfolding and oxidatively damaged proteins from irreversible aggregation. Plays an important role in the bacterial defense system toward oxidative stress. This chain is 33 kDa chaperonin, found in Synechococcus sp. (strain JA-3-3Ab) (Cyanobacteria bacterium Yellowstone A-Prime).